Here is a 488-residue protein sequence, read N- to C-terminus: MIPVVALVGRPNVGKSTLFNRLTRTRDALVADFPGLTRDRKYGRAFLSGYEFIVVDTGGIDGTEEGIETKMAEQSLAAIEEADVVLFMTDARAGLTAADLSIAQHLRSREKTTFVVANKVDGIDADSACAEFWSLGLGEVYQMAASQGRGVTNMIEYALTPYAEAMGIERQGEEEVVDERQYTEEEAEAEQKRLQDLPIKLAIIGKPNVGKSTLTNRILGEERVVVYDEPGTTRDSIYIPMEREGREYVIIDTAGVRRRSKVHQVIEKFSVIKTLKAVEDANVVLLIIDAREGVAEQDLGLLGFALNAGRALVIAVNKWDGIDQGIKDRVKSELDRRLGFIDFARIHFISALHGTGVGHLFESIEEAYDSATRRVSTSMLTRIMQMSQDDHQPPLVNGRRVKLKYAHAGGYNPPIVVIHGNQVSRLPDSYKRYMMNYFRRSLKVVGTPIQLRFQEGDNPFENKTEKLTMSQERRRKRALSHIKDRKTK.

EngA-type G domains lie at 3–166 (PVVA…AEAM) and 199–372 (IKLA…DSAT). GTP is bound by residues 9–16 (GRPNVGKS), 56–60 (DTGGI), 118–121 (NKVD), 205–212 (GKPNVGKS), 252–256 (DTAGV), and 317–320 (NKWD). Positions 373–457 (RRVSTSMLTR…PIQLRFQEGD (85 aa)) constitute a KH-like domain. Residues 469 to 488 (MSQERRRKRALSHIKDRKTK) are disordered. Basic residues predominate over residues 473-488 (RRRKRALSHIKDRKTK).

The protein belongs to the TRAFAC class TrmE-Era-EngA-EngB-Septin-like GTPase superfamily. EngA (Der) GTPase family. Associates with the 50S ribosomal subunit.

GTPase that plays an essential role in the late steps of ribosome biogenesis. The protein is GTPase Der of Shewanella putrefaciens (strain CN-32 / ATCC BAA-453).